The following is a 67-amino-acid chain: Large ribosomal subunit protein uL30 (67 aa).

It belongs to the universal ribosomal protein uL30 family. As to quaternary structure, part of the 50S ribosomal subunit.

The chain is Large ribosomal subunit protein uL30 from Thermotoga petrophila (strain ATCC BAA-488 / DSM 13995 / JCM 10881 / RKU-1).